Here is a 293-residue protein sequence, read N- to C-terminus: Ribosomal protein L11 methyltransferase (293 aa).

Residues T145, G166, D188, and N230 each contribute to the S-adenosyl-L-methionine site.

It belongs to the methyltransferase superfamily. PrmA family.

It localises to the cytoplasm. It catalyses the reaction L-lysyl-[protein] + 3 S-adenosyl-L-methionine = N(6),N(6),N(6)-trimethyl-L-lysyl-[protein] + 3 S-adenosyl-L-homocysteine + 3 H(+). Functionally, methylates ribosomal protein L11. The polypeptide is Ribosomal protein L11 methyltransferase (Shewanella baltica (strain OS155 / ATCC BAA-1091)).